Consider the following 295-residue polypeptide: Acetylglutamate kinase (295 aa).

Substrate contacts are provided by residues 66 to 67 (GG), R88, and N193.

Belongs to the acetylglutamate kinase family. ArgB subfamily.

The protein resides in the cytoplasm. The catalysed reaction is N-acetyl-L-glutamate + ATP = N-acetyl-L-glutamyl 5-phosphate + ADP. The protein operates within amino-acid biosynthesis; L-arginine biosynthesis; N(2)-acetyl-L-ornithine from L-glutamate: step 2/4. Catalyzes the ATP-dependent phosphorylation of N-acetyl-L-glutamate. This is Acetylglutamate kinase from Sinorhizobium fredii (strain NBRC 101917 / NGR234).